Reading from the N-terminus, the 1720-residue chain is TOG array regulator of axonemal microtubules protein 1 (1720 aa).

2 TOG regions span residues 94-312 (EEDT…RRLE) and 352-596 (PQEL…MPSS). 8 HEAT repeats span residues 175 to 212 (AFSLALLPQLVVSLREENPALRKDALQILHICLKRSPG), 214 to 247 (VLRTLIQQGLESTDARLRASTALLLPILLTTEDL), 251 to 289 (LDLTEVIISLARKLGDQETEEESETAFSALQQIGERLGQ), 345 to 384 (NLKFGIIPQELHSRLLDQEDYKNRTQAVEELKQVLGKFNP), 390 to 427 (SSLVGFISLLYNLLDDSNFKVVHGTLEVLHLLVIRLGE), 431 to 466 (QFLGPVIAASVKVLADNKLVIKQEYMKIFLKLMKEV), 467 to 504 (GPQQVLCLLLEHLKHKHSRVREEVVNICICSLLTYPSE), and 506 to 543 (FDLPKLSFDLAPALVDSKRRVRQAALEAFAVLASSMGS). 4 stretches are compositionally biased toward polar residues: residues 794–809 (FGSQTECTSSNGQNPS), 819–829 (PVSSPRTSPKH), 842–852 (DNSVNFSNSWP), and 868–877 (LVSQKSSDPT). Disordered stretches follow at residues 794–924 (FGSQ…SLLP), 970–998 (HSSLRSLRNSAAKKRAKLSGSTSDLESPD), and 1067–1087 (KKISHIAEQSPSAGSSSNPQQ). Polar residues predominate over residues 1073–1087 (AEQSPSAGSSSNPQQ). The tract at residues 1256–1425 (EIALTEALRL…YIKDSVRNLQ (170 aa)) is TOG 3. 2 HEAT repeats span residues 1294–1331 (TKLHETNFAVVQEVKNLRSGVSRAAVVCLSDLFTYLKK) and 1335–1372 (QELDTTVKVLLHKAGESNTFIREDVDKALRAMVNNVTP). The interval 1430–1462 (GEIPLDTPSAKGRRSHTGSVGNTRSSSVSRDAF) is disordered. Positions 1446–1458 (TGSVGNTRSSSVS) are enriched in polar residues. The segment at 1484 to 1720 (SLESAEYLKL…LLDMTILNEL (237 aa)) is TOG 4. HEAT repeat units follow at residues 1485–1522 (LESAEYLKLITGLLNAKDFRDRINGIKQLLSDTENNQD), 1526–1563 (GNIVKIFDAFKSRLHDSNSKVNLVALETMHKMIPLLRD), and 1567–1605 (PIINMLIPAIVDNNLNSKNPGIYAAATNVVQALSQHVDN).

It belongs to the Crescerin family. Interacts with ARMC9, CCDC66, CEP104 and CSPP1.

It localises to the cell projection. Its subcellular location is the cilium. The protein resides in the cytoplasm. The protein localises to the cytoskeleton. It is found in the cilium axoneme. Functionally, involved in ciliogenesis. It is required for appropriate acetylation and polyglutamylation of ciliary microtubules, and regulation of cilium length. Interacts with microtubules and promotes microtubule polymerization via its HEAT repeat domains, especially those in TOG region 2 and 4. The protein is TOG array regulator of axonemal microtubules protein 1 of Homo sapiens (Human).